The sequence spans 211 residues: Large ribosomal subunit protein uL4 (211 aa).

The tract at residues 40-85 is disordered; the sequence is QQAHSRQGTASTLTRSEVRGGGRKPYKQKGTGRARQGSIRTPLRPG. Residues 41–54 are compositionally biased toward polar residues; that stretch reads QAHSRQGTASTLTR. A compositionally biased stretch (basic residues) spans 60–71; it reads GGRKPYKQKGTG.

The protein belongs to the universal ribosomal protein uL4 family. As to quaternary structure, part of the 50S ribosomal subunit.

Its function is as follows. One of the primary rRNA binding proteins, this protein initially binds near the 5'-end of the 23S rRNA. It is important during the early stages of 50S assembly. It makes multiple contacts with different domains of the 23S rRNA in the assembled 50S subunit and ribosome. Forms part of the polypeptide exit tunnel. The protein is Large ribosomal subunit protein uL4 of Prochlorococcus marinus (strain NATL2A).